A 144-amino-acid chain; its full sequence is UPF0735 ACT domain-containing protein LCABL_12100 (144 aa).

The region spanning 68 to 143 is the ACT domain; the sequence is VISLMLHHDR…GVSDVHLVSV (76 aa).

This sequence belongs to the UPF0735 family.

The protein is UPF0735 ACT domain-containing protein LCABL_12100 of Lacticaseibacillus casei (strain BL23) (Lactobacillus casei).